A 763-amino-acid polypeptide reads, in one-letter code: Thiamine biosynthesis multifunctional protein ThiED (763 aa).

The thiamine-phosphate synthase stretch occupies residues 1-210 (MTDFSLYLVT…ANPAAAATRL (210 aa)). 4-amino-2-methyl-5-(diphosphooxymethyl)pyrimidine-binding positions include 37 to 41 (QLRDK) and Asn-69. Mg(2+) contacts are provided by Asp-70 and Asp-88. Ser-107 contacts 4-amino-2-methyl-5-(diphosphooxymethyl)pyrimidine. 140–142 (TAT) serves as a coordination point for 2-[(2R,5Z)-2-carboxy-4-methylthiazol-5(2H)-ylidene]ethyl phosphate. 4-amino-2-methyl-5-(diphosphooxymethyl)pyrimidine is bound at residue Lys-143. 2-[(2R,5Z)-2-carboxy-4-methylthiazol-5(2H)-ylidene]ethyl phosphate is bound by residues Gly-174 and 194-195 (VS). Residues 245 to 500 (LSIAGTDPTG…GTGNGPVDHG (256 aa)) form a hydroxymethylpyrimidine/phosphomethylpyrimidine kinase region. Gln-282 serves as a coordination point for 4-amino-5-hydroxymethyl-2-methylpyrimidine. A thiaminase-2 region spans residues 550–763 (FTRALWEASG…RHGWTMVGSS (214 aa)).

This sequence in the N-terminal section; belongs to the thiamine-phosphate synthase family. The protein in the central section; belongs to the ThiD family. It in the C-terminal section; belongs to the thiaminase-2 family. The cofactor is Mg(2+).

The enzyme catalyses 2-[(2R,5Z)-2-carboxy-4-methylthiazol-5(2H)-ylidene]ethyl phosphate + 4-amino-2-methyl-5-(diphosphooxymethyl)pyrimidine + 2 H(+) = thiamine phosphate + CO2 + diphosphate. The catalysed reaction is 2-(2-carboxy-4-methylthiazol-5-yl)ethyl phosphate + 4-amino-2-methyl-5-(diphosphooxymethyl)pyrimidine + 2 H(+) = thiamine phosphate + CO2 + diphosphate. It carries out the reaction 4-methyl-5-(2-phosphooxyethyl)-thiazole + 4-amino-2-methyl-5-(diphosphooxymethyl)pyrimidine + H(+) = thiamine phosphate + diphosphate. It catalyses the reaction 4-amino-5-hydroxymethyl-2-methylpyrimidine + ATP = 4-amino-2-methyl-5-(phosphooxymethyl)pyrimidine + ADP + H(+). The enzyme catalyses 4-amino-2-methyl-5-(phosphooxymethyl)pyrimidine + ATP = 4-amino-2-methyl-5-(diphosphooxymethyl)pyrimidine + ADP. Its pathway is cofactor biosynthesis; thiamine diphosphate biosynthesis; 4-amino-2-methyl-5-diphosphomethylpyrimidine from 5-amino-1-(5-phospho-D-ribosyl)imidazole: step 3/3. It functions in the pathway cofactor biosynthesis; thiamine diphosphate biosynthesis; thiamine phosphate from 4-amino-2-methyl-5-diphosphomethylpyrimidine and 4-methyl-5-(2-phosphoethyl)-thiazole: step 1/1. In terms of biological role, condenses 4-methyl-5-(beta-hydroxyethyl)thiazole monophosphate (THZ-P) and 2-methyl-4-amino-5-hydroxymethyl pyrimidine pyrophosphate (HMP-PP) to form thiamine monophosphate (TMP). Its function is as follows. Catalyzes the phosphorylation of hydroxymethylpyrimidine phosphate (HMP-P) to HMP-PP, and of HMP to HMP-P. This chain is Thiamine biosynthesis multifunctional protein ThiED (theD), found in Corynebacterium glutamicum (strain ATCC 13032 / DSM 20300 / JCM 1318 / BCRC 11384 / CCUG 27702 / LMG 3730 / NBRC 12168 / NCIMB 10025 / NRRL B-2784 / 534).